The sequence spans 494 residues: GDP-fucose protein O-fucosyltransferase 4 (494 aa).

Over M1–E7 the chain is Cytoplasmic. Residues A8 to S24 traverse the membrane as a helical; Signal-anchor for type II membrane protein segment. The Lumenal portion of the chain corresponds to S25 to L494. N167 carries N-linked (GlcNAc...) asparagine glycosylation. C390 and C393 are oxidised to a cystine.

Belongs to the glycosyltransferase 10 family.

Its subcellular location is the endoplasmic reticulum membrane. The catalysed reaction is L-threonyl-[protein] + GDP-beta-L-fucose = 3-O-(alpha-L-fucosyl)-L-threonyl-[protein] + GDP + H(+). It carries out the reaction L-seryl-[protein] + GDP-beta-L-fucose = 3-O-(alpha-L-fucosyl)-L-seryl-[protein] + GDP + H(+). It participates in protein modification; protein glycosylation. Protein O-fucosyltransferase that specifically catalyzes O-fucosylation of serine or threonine residues in EMI domains of target proteins, such as MMRN1, MMRN2 and EMID1. Attaches fucose through an O-glycosidic linkage. O-fucosylation of EMI domain-containing proteins may be required for facilitating protein folding and secretion. Also shows minor alpha-(1,3)-fucosyltransferase activity toward activity toward biantennary N-glycan acceptors. However, this was tested with a library of synthetic substrates and this activity is unsure in vivo. The protein is GDP-fucose protein O-fucosyltransferase 4 (Fut11) of Rattus norvegicus (Rat).